We begin with the raw amino-acid sequence, 331 residues long: MDAAVQVQRKKASNGAQVRNHWNVEEAKALYDLPFADLMLQAQRAHRKNFDPNHVETASLLSIKTGGCPEDCGYCSQSAHYATGLKATRLMRCADVVATAQRAKDAGATRFCMAAAWRTPKDRDLDSVCDMVNAVKGLGMETCVTLGTLTPKHAARLAEAGLDFYNHNVDTSPEFYSKIITTRSLQDRIDTLAHVRDAGIKICCGGIIGMGERVEDRLGMLVLLANLPNYPESVPINLWNKIEGVPVEDTAEPPDPIALVRLLATARVMMPRSVVRLSAGRQYMTDELQALCFLAGANSIFVGDVLLTTNNPKVDRDADLLARLGITSGLA.

In terms of domain architecture, Radical SAM core spans 53-272; the sequence is NHVETASLLS…LATARVMMPR (220 aa). 3 residues coordinate [4Fe-4S] cluster: cysteine 68, cysteine 72, and cysteine 75. Residues cysteine 112, cysteine 143, cysteine 203, and arginine 276 each coordinate [2Fe-2S] cluster.

It belongs to the radical SAM superfamily. Biotin synthase family. Homodimer. Requires [4Fe-4S] cluster as cofactor. [2Fe-2S] cluster serves as cofactor.

The catalysed reaction is (4R,5S)-dethiobiotin + (sulfur carrier)-SH + 2 reduced [2Fe-2S]-[ferredoxin] + 2 S-adenosyl-L-methionine = (sulfur carrier)-H + biotin + 2 5'-deoxyadenosine + 2 L-methionine + 2 oxidized [2Fe-2S]-[ferredoxin]. It functions in the pathway cofactor biosynthesis; biotin biosynthesis; biotin from 7,8-diaminononanoate: step 2/2. Functionally, catalyzes the conversion of dethiobiotin (DTB) to biotin by the insertion of a sulfur atom into dethiobiotin via a radical-based mechanism. The chain is Biotin synthase from Bradyrhizobium diazoefficiens (strain JCM 10833 / BCRC 13528 / IAM 13628 / NBRC 14792 / USDA 110).